Reading from the N-terminus, the 396-residue chain is S-adenosylmethionine synthase (396 aa).

Residue histidine 14 participates in ATP binding. Residue aspartate 16 participates in Mg(2+) binding. Glutamate 42 serves as a coordination point for K(+). The L-methionine site is built by glutamate 55 and glutamine 98. The segment at glutamine 98–glutamate 108 is flexible loop. Residues aspartate 174–lysine 176, arginine 241–phenylalanine 242, aspartate 250, arginine 256–lysine 257, alanine 273, and lysine 277 contribute to the ATP site. Aspartate 250 is a binding site for L-methionine. Lysine 281 is an L-methionine binding site.

This sequence belongs to the AdoMet synthase family. In terms of assembly, homotetramer; dimer of dimers. Mg(2+) is required as a cofactor. The cofactor is K(+).

Its subcellular location is the cytoplasm. It catalyses the reaction L-methionine + ATP + H2O = S-adenosyl-L-methionine + phosphate + diphosphate. It participates in amino-acid biosynthesis; S-adenosyl-L-methionine biosynthesis; S-adenosyl-L-methionine from L-methionine: step 1/1. Functionally, catalyzes the formation of S-adenosylmethionine (AdoMet) from methionine and ATP. The overall synthetic reaction is composed of two sequential steps, AdoMet formation and the subsequent tripolyphosphate hydrolysis which occurs prior to release of AdoMet from the enzyme. This chain is S-adenosylmethionine synthase, found in Fervidobacterium nodosum (strain ATCC 35602 / DSM 5306 / Rt17-B1).